A 282-amino-acid chain; its full sequence is 3-methyl-2-oxobutanoate hydroxymethyltransferase (282 aa).

2 residues coordinate Mg(2+): D45 and D84. 3-methyl-2-oxobutanoate-binding positions include 45 to 46, D84, and K114; that span reads DS. Residue E116 participates in Mg(2+) binding. The Proton acceptor role is filled by E183.

Belongs to the PanB family. As to quaternary structure, homodecamer; pentamer of dimers. The cofactor is Mg(2+).

It is found in the cytoplasm. It catalyses the reaction 3-methyl-2-oxobutanoate + (6R)-5,10-methylene-5,6,7,8-tetrahydrofolate + H2O = 2-dehydropantoate + (6S)-5,6,7,8-tetrahydrofolate. It participates in cofactor biosynthesis; (R)-pantothenate biosynthesis; (R)-pantoate from 3-methyl-2-oxobutanoate: step 1/2. Its function is as follows. Catalyzes the reversible reaction in which hydroxymethyl group from 5,10-methylenetetrahydrofolate is transferred onto alpha-ketoisovalerate to form ketopantoate. The chain is 3-methyl-2-oxobutanoate hydroxymethyltransferase from Syntrophobacter fumaroxidans (strain DSM 10017 / MPOB).